Here is a 382-residue protein sequence, read N- to C-terminus: Cysteine desulfurase IscS 1 (382 aa).

Pyridoxal 5'-phosphate is bound at residue Asn149. The active-site Cysteine persulfide intermediate is the Cys321. [2Fe-2S] cluster is bound at residue Cys321.

It belongs to the class-V pyridoxal-phosphate-dependent aminotransferase family. NifS/IscS subfamily. As to quaternary structure, homodimer. Forms a heterotetramer with IscU, interacts with other sulfur acceptors. Pyridoxal 5'-phosphate is required as a cofactor.

It is found in the cytoplasm. The catalysed reaction is (sulfur carrier)-H + L-cysteine = (sulfur carrier)-SH + L-alanine. It participates in cofactor biosynthesis; iron-sulfur cluster biosynthesis. In terms of biological role, master enzyme that delivers sulfur to a number of partners involved in Fe-S cluster assembly, tRNA modification or cofactor biosynthesis. Catalyzes the removal of elemental sulfur atoms from cysteine to produce alanine. Functions as a sulfur delivery protein for Fe-S cluster synthesis onto IscU, an Fe-S scaffold assembly protein, as well as other S acceptor proteins. The chain is Cysteine desulfurase IscS 1 from Archaeoglobus fulgidus (strain ATCC 49558 / DSM 4304 / JCM 9628 / NBRC 100126 / VC-16).